The sequence spans 277 residues: Zaragozic acid A biosynthesis cluster protein 1 (277 aa).

It participates in secondary metabolite biosynthesis. Part of the gene cluster that mediates the biosynthesis of squalestatin S1 (SQS1, also known as zaragozic acid A), a heavily oxidized fungal polyketide that offers potent cholesterol lowering activity by targeting squalene synthase (SS). SQS1 is composed of a 2,8-dioxobicyclic[3.2.1]octane-3,4,5-tricarboxyclic acid core that is connected to two lipophilic polyketide arms. These initial steps feature the priming of an unusual benzoic acid starter unit onto the highly reducing polyketide synthase clz14, followed by oxaloacetate extension and product release to generate a tricarboxylic acid containing product. The phenylalanine ammonia lyase (PAL) clz10 and the acyl-CoA ligase clz12 are involved in transforming phenylalanine into benzoyl-CoA. The citrate synthase-like protein clz17 is involved in connecting the C-alpha-carbons of the hexaketide chain and oxaloacetate to afford the tricarboxylic acid unit. The potential hydrolytic enzymes, clz11 and clz13, are in close proximity to pks2 and may participate in product release. On the other side, the tetraketide arm is synthesized by a the squalestatin tetraketide synthase clz2 and enzymatically esterified to the core in the last biosynthetic step, by the acetyltransferase clz6. The biosynthesis of the tetraketide must involve 3 rounds of chain extension. After the first and second rounds methyl-transfer occurs, and in all rounds of extension the ketoreductase and dehydratase are active. The enoyl reductase and C-MeT of clz2 are not active in the final round of extension. The acetyltransferase clz6 appears to have a broad substrate selectivity for its acyl CoA substrate, allowing the in vitro synthesis of novel squalestatins. The biosynthesis of SQS1 requires several oxidative steps likely performed by oxidoreductases clz3, clz15 and clz16. Finally, in support of the identification of the cluster as being responsible for SQS1 production, the cluster contains a gene encoding a putative squalene synthase (SS) clz20, suggesting a likely mechanism for self-resistance. This chain is Zaragozic acid A biosynthesis cluster protein 1, found in Cochliobolus lunatus (Filamentous fungus).